Here is a 1705-residue protein sequence, read N- to C-terminus: Clathrin heavy chain 1 (1705 aa).

N-acetylalanine is present on A2. Residues 2 to 492 form a globular terminal domain region; the sequence is AAANAPIIMK…VDNDLALKIY (491 aa). WD40-like repeat regions lie at residues 25 to 67, 68 to 113, 114 to 155, 156 to 205, 206 to 270, 271 to 314, and 315 to 343; these read FITF…RPIT, ADSA…MPEQ, VAFW…ANLA, NNQI…QALE, AHAA…PDFA, DDFP…ISPD, and PIFLTSEASSVGGFYAINRRGQVLLATVN. A binding site for the uncoating ATPase, involved in lattice disassembly region spans residues 462 to 478; sequence ENWLAEDKLECSEELGD. The tract at residues 493-536 is flexible linker; the sequence is IKARATPKVVAAFAERREFDKILIYSKQVGYTPDYMFLLQTILR. The distal segment stretch occupies residues 537-648; the sequence is TDPQGAVNFA…QSLKHYSELP (112 aa). Positions 537-1705 are heavy chain arm; it reads TDPQGAVNFA…PYGMPPMGGY (1169 aa). 7 CHCR repeats span residues 551–697, 700–842, 847–986, 993–1138, 1142–1283, 1288–1434, and 1437–1580; these read QMEG…QIIV, CKEY…PEDF, ILSV…QLID, LPES…VSDA, FIRA…FRLA, LNII…DIIN, and LNVL…KECF. The tract at residues 653-1705 is proximal segment; the sequence is VIVNTHAIEP…PYGMPPMGGY (1053 aa). An involved in binding clathrin light chain region spans residues 1227 to 1536; that stretch reads AAKIIYAFIS…YIYKKAGRWK (310 aa). The interval 1564–1705 is trimerization; sequence AEQLLVYFIE…PYGMPPMGGY (142 aa).

It belongs to the clathrin heavy chain family. As to quaternary structure, clathrin triskelions, composed of 3 heavy chains and 3 light chains, are the basic subunits of the clathrin coat. Interacts with SCYL2B.

It localises to the cytoplasmic vesicle membrane. The protein resides in the membrane. Its subcellular location is the coated pit. Functionally, clathrin is the major protein of the polyhedral coat of coated pits and vesicles. Mediates endocytosis and is required for a correct polar distribution of PIN auxin transporters. The polypeptide is Clathrin heavy chain 1 (Arabidopsis thaliana (Mouse-ear cress)).